Consider the following 96-residue polypeptide: U-reduvitoxin-Pr12a (96 aa).

Residues 1–20 (MKTALLLFFALVFIAFETEA) form the signal peptide. Disulfide bonds link C21/C38, C33/C53, and C36/C47. Pacifastin domains follow at residues 21–55 (CRPG…ICPP) and 59–94 (KLEC…CIHK). The interval 54–56 (PPR) is pro-Pro-Arg motif necessary for proteolytic processing. Intrachain disulfides connect C62–C77, C72–C91, and C75–C86.

Belongs to the protease inhibitor I19 family. In terms of tissue distribution, expressed by the venom gland.

The protein localises to the secreted. Functionally, inhibits trypsin activity and prophenoloxidase (PPO) activation, an enzyme essential for both clotting and insect innate immune responses. It does not inhibit activity of chymotrypsin and protease K, and has no effect on phenoloxidase (PO) activity. This Platymeris rhadamanthus (Red spot assassin bug) protein is U-reduvitoxin-Pr12a.